The primary structure comprises 496 residues: Cytochrome P450 71D180 (496 aa).

The chain crosses the membrane as a helical; Signal-anchor for type II membrane protein span at residues 1-21; the sequence is MDISISWVVIIVFVLSYLILM. Cys-435 provides a ligand contact to heme. Residues 471–496 are disordered; it reads MSETPGLSGPRKNPLIMIPTIHNPTS.

Belongs to the cytochrome P450 family. Heme is required as a cofactor. Mostly expressed in flowers and stems, and, to a lower extent, in leaves.

It localises to the membrane. The enzyme catalyses gamma-terpinene + 2 reduced [NADPH--hemoprotein reductase] + 2 O2 = carvacrol + 2 oxidized [NADPH--hemoprotein reductase] + 3 H2O + 2 H(+). It catalyses the reaction (4S)-limonene + reduced [NADPH--hemoprotein reductase] + O2 = (1S,5R)-carveol + oxidized [NADPH--hemoprotein reductase] + H2O + H(+). The catalysed reaction is (4R)-limonene + reduced [NADPH--hemoprotein reductase] + O2 = (1R,5S)-carveol + oxidized [NADPH--hemoprotein reductase] + H2O + H(+). It participates in secondary metabolite biosynthesis; terpenoid biosynthesis. Its function is as follows. Involved in the biosynthesis of phenolic monoterpenes natural products thymol and carvacrol which have a broad range of biological activities acting as antimicrobial compounds, insecticides, antioxidants and pharmaceutical agents. Catalyzes the C2-hydroxylation of gamma-terpinene to produce carvacrol. Also mediates the C6-hydroxylation of (4S)-limonene and (4R)-limonene to form carveol. The polypeptide is Cytochrome P450 71D180 (Origanum vulgare (Wild marjoram)).